A 156-amino-acid polypeptide reads, in one-letter code: Ribosome maturation factor RimP (156 aa).

The protein belongs to the RimP family.

It localises to the cytoplasm. Required for maturation of 30S ribosomal subunits. This Synechococcus sp. (strain JA-2-3B'a(2-13)) (Cyanobacteria bacterium Yellowstone B-Prime) protein is Ribosome maturation factor RimP.